The primary structure comprises 418 residues: UDP-N-acetylglucosamine 1-carboxyvinyltransferase (418 aa).

22–23 serves as a coordination point for phosphoenolpyruvate; that stretch reads KN. UDP-N-acetyl-alpha-D-glucosamine is bound at residue Arg-92. The Proton donor role is filled by Cys-116. Residue Cys-116 is modified to 2-(S-cysteinyl)pyruvic acid O-phosphothioketal. UDP-N-acetyl-alpha-D-glucosamine contacts are provided by Asp-305 and Ile-327.

This sequence belongs to the EPSP synthase family. MurA subfamily.

It is found in the cytoplasm. It catalyses the reaction phosphoenolpyruvate + UDP-N-acetyl-alpha-D-glucosamine = UDP-N-acetyl-3-O-(1-carboxyvinyl)-alpha-D-glucosamine + phosphate. Its pathway is cell wall biogenesis; peptidoglycan biosynthesis. Cell wall formation. Adds enolpyruvyl to UDP-N-acetylglucosamine. The sequence is that of UDP-N-acetylglucosamine 1-carboxyvinyltransferase from Gluconobacter oxydans (strain 621H) (Gluconobacter suboxydans).